A 361-amino-acid polypeptide reads, in one-letter code: Large ribosomal subunit protein mL45 (361 aa).

The protein belongs to the mitochondrion-specific ribosomal protein mL45 family.

The protein resides in the mitochondrion. The polypeptide is Large ribosomal subunit protein mL45 (mrpl-45) (Caenorhabditis briggsae).